A 207-amino-acid polypeptide reads, in one-letter code: Urease accessory protein UreG (207 aa).

Position 14–21 (14–21 (GPVGSGKT)) interacts with GTP.

This sequence belongs to the SIMIBI class G3E GTPase family. UreG subfamily. In terms of assembly, homodimer. UreD, UreF and UreG form a complex that acts as a GTP-hydrolysis-dependent molecular chaperone, activating the urease apoprotein by helping to assemble the nickel containing metallocenter of UreC. The UreE protein probably delivers the nickel.

The protein resides in the cytoplasm. Functionally, facilitates the functional incorporation of the urease nickel metallocenter. This process requires GTP hydrolysis, probably effectuated by UreG. This chain is Urease accessory protein UreG, found in Pseudomonas entomophila (strain L48).